The chain runs to 838 residues: MATEIITEKKEIVARTRSSGITFNPPVTHDMVRSLFDPTIKKSFLECCITLTILANFVLCYYLINWFGLSQAKLIFLIQYVYWRLAYNLGIGIILHYQSHYESLTKYANQNKLFKKESAKTNWIASFFQFEIKSKMPNDYNLHSYPDELNCWLLFRQFVDLILMQDFTTYIIYVYLSLPTDVSSLINWKSLIGIAMILFNIWVKIDAHRVVKDYAWYWGDFFFLQDAELTFDGVFNISPHPMYSIGYLGYYGLSLICGDYRVLLVSVGGHFLQFLFLKYVESPHIERTYGSDSPSNSTQHQIDDLIAKENYDYSRPLINTGILFENFQFLRFSDYFTVSTILVLFSWFFTSKPSNNFLFVLTLLTKLTTWLLTSWILFQQSNRKWFTRLFLKNGYTQIYSYQQWQFLYNYSLIVTNTLLFLHTLSELYSIQSSDGLNNSHVIFGLLLCAIQIWCNVETRDAISDFGWFYGDFFLTNYITTRKLTSQGIYRYLNNPEAILGVAGIWGSVLMTNFSKTNVTLAVLWTVTNLIFVKLIEEPHVSKVYGNGTRVSGVQQTLLALKPFRWISDLIDDWGNKMMKSLHGFDSDSDSESISSGKKGNLSSLKLSKKSKLKNRVQSDNKLAPNSKFEIEDLEDEIVYLPNSVTISWKLPISMFNEKDWIGLYNVLETGSDRTQTKIPSLGHWSAVDATGYPHDSINTNSITEFKKGSKNVSGRVTFDANLLYFKPGIYEFRYHSKNSHKVLLISSPFQISFPEFDNEAQVDIKNEIMKFLDAISCMKNEKYFANDNKYFTADAFSNYIKDSFGIELSTDYIRRVNGDVEVISRRVHDIKEVLDSLN.

Over 1 to 48 (MATEIITEKKEIVARTRSSGITFNPPVTHDMVRSLFDPTIKKSFLECC) the chain is Lumenal. The helical transmembrane segment at 49 to 69 (ITLTILANFVLCYYLINWFGL) threads the bilayer. Residues 70 to 73 (SQAK) are Cytoplasmic-facing. The chain crosses the membrane as a helical span at residues 74–94 (LIFLIQYVYWRLAYNLGIGII). Topologically, residues 95 to 157 (LHYQSHYESL…ELNCWLLFRQ (63 aa)) are lumenal. Residues 158–178 (FVDLILMQDFTTYIIYVYLSL) traverse the membrane as a helical segment. Over 179–184 (PTDVSS) the chain is Cytoplasmic. Residues 185-205 (LINWKSLIGIAMILFNIWVKI) form a helical membrane-spanning segment. The Lumenal portion of the chain corresponds to 206–236 (DAHRVVKDYAWYWGDFFFLQDAELTFDGVFN). Residues 237 to 257 (ISPHPMYSIGYLGYYGLSLIC) traverse the membrane as a helical segment. At 258 to 261 (GDYR) the chain is on the cytoplasmic side. A helical membrane pass occupies residues 262–282 (VLLVSVGGHFLQFLFLKYVES). The Lumenal portion of the chain corresponds to 283 to 328 (PHIERTYGSDSPSNSTQHQIDDLIAKENYDYSRPLINTGILFENFQ). The helical transmembrane segment at 329-349 (FLRFSDYFTVSTILVLFSWFF) threads the bilayer. Residues 350–356 (TSKPSNN) lie on the Cytoplasmic side of the membrane. A helical transmembrane segment spans residues 357–377 (FLFVLTLLTKLTTWLLTSWIL). The Lumenal portion of the chain corresponds to 378-403 (FQQSNRKWFTRLFLKNGYTQIYSYQQ). The chain crosses the membrane as a helical span at residues 404–424 (WQFLYNYSLIVTNTLLFLHTL). The Cytoplasmic portion of the chain corresponds to 425–435 (SELYSIQSSDG). A helical membrane pass occupies residues 436 to 456 (LNNSHVIFGLLLCAIQIWCNV). Topologically, residues 457 to 517 (ETRDAISDFG…VLMTNFSKTN (61 aa)) are lumenal. The helical transmembrane segment at 518 to 538 (VTLAVLWTVTNLIFVKLIEEP) threads the bilayer. At 539–838 (HVSKVYGNGT…DIKEVLDSLN (300 aa)) the chain is on the cytoplasmic side.

It belongs to the class VI-like SAM-binding methyltransferase superfamily. CHO2 family.

The protein localises to the endoplasmic reticulum membrane. The catalysed reaction is a 1,2-diacyl-sn-glycero-3-phosphoethanolamine + S-adenosyl-L-methionine = a 1,2-diacyl-sn-glycero-3-phospho-N-methylethanolamine + S-adenosyl-L-homocysteine + H(+). Its pathway is phospholipid metabolism; phosphatidylcholine biosynthesis. Catalyzes the first step of the methylation pathway of phosphatidylcholine biosynthesis, the SAM-dependent methylation of phosphatidylethanolamine (PE) to phosphatidylmonomethylethanolamine (PMME). The polypeptide is Phosphatidylethanolamine N-methyltransferase 1 (CHO2-1) (Vanderwaltozyma polyspora (strain ATCC 22028 / DSM 70294 / BCRC 21397 / CBS 2163 / NBRC 10782 / NRRL Y-8283 / UCD 57-17) (Kluyveromyces polysporus)).